The chain runs to 1030 residues: MSGKRAVLNKDLFFQRAERLYEHWEKGADGLDSIKSLAFVYGETDNPYTKTSALFTWLFGHEIADTVLLLLKDHIYILGSNRKVEFFGSVTGDNQSSGKVPTVSTLLRDKTDKDAGNFEKLIDHIKSAGGDVGNFVKEKFSSEFVSSWNKALEEGGVNKNDVTLAFTHLFAVKDDKEMDLIRKSAQATTASWTAARARYVEIIDQEKRVRHSVLSNEFAAFMKDSKVQQALAKYEADTCYDPIVMSGGNYSFKWNHESSESHLHSQFGTIITSFGARLSEYCTNLTRTMLIFPSSELETAYEAILAAELAVIAALKPGAKLSDVYKIGIDTLTEKSPKLAETLNKKELGFATGIEFRESRLAISAKCDEVVKAGMVFIVYIGVDSIPNKNKGEKGKPAAIAISDTILVKEEGDNEILTEKAKSRLKSNVIKFKEEQENREAEKDNDQKKMLGRGQRSVVLTDQTRNKTTNEELRKERQKELGVQLNELAKARLSKQGGGTDEKKSKKSNVSYKTEERFPQDADVQKMLIFVDRKYDSVVVPIFGIPVPFHISMIKNCSQSVEGDFTYLRINFATPGSQVGKDSGQFPHPLAHYMKELTFRASNIKDHHSDSTAPSHNLSTAFRLIKEMQKRFKTEEAEEREKEGAVKQDKLILSQNKLNPKLKDLLIRPNIIQKRITGSLEAHTNGFRYTSLRGDRIDVLYNNIKHAFFQPCDNEMIILLHFHLKNPVLWGKKKYKDVQFYTEVGEITTDLGKYHHMQDRDDMQSEQQEREMRRRLNAAFNSFCEKVSRLTNDQFEFDSPFAGLGFFGVPYRSATTLKPTASCLVNLTEWPTFIVTLSEVELVHFERVSLQLKNFDMVFIFKDYKIKPQMVAQIPMSSIDKIKEWLHTCDIWYSEGIQSLNWAKVMKTITDDLEAFFEEGGWSFLNVESDNEEAMDDSDDSDAYDPEEEDASAGSGSESDEDESEGEETESDDDDEGSLDSDESEGKDWSDLEEEAANADKRREVEEPSRDRDRKRPHSSKSGPSHKRRK.

Residues 424-445 are a coiled coil; that stretch reads RLKSNVIKFKEEQENREAEKDN. Composition is skewed to basic and acidic residues over residues 435 to 449 and 464 to 477; these read EQEN…DQKK and TRNK…RKER. 2 disordered regions span residues 435–477 and 491–514; these read EQEN…RKER and ARLS…SYKT. A coiled-coil region spans residues 623–645; the sequence is RLIKEMQKRFKTEEAEEREKEGA. The interval 927-1030 is disordered; sequence VESDNEEAMD…KSGPSHKRRK (104 aa). Acidic residues-rich tracts occupy residues 929 to 951 and 958 to 983; these read SDNE…EEDA and ESDE…DSDE. Positions 987–1007 form a coiled coil; that stretch reads KDWSDLEEEAANADKRREVEE. Over residues 998-1014 the composition is skewed to basic and acidic residues; sequence NADKRREVEEPSRDRDR. A compositionally biased stretch (basic residues) spans 1015–1030; the sequence is KRPHSSKSGPSHKRRK.

Belongs to the peptidase M24 family. SPT16 subfamily. As to quaternary structure, component of the FACT complex, a stable heterodimer of spt-16 and hmg-3 or hmg-4. As to expression, expressed in the germline and somatic cells.

It localises to the nucleus. Its subcellular location is the chromosome. Functionally, component of the FACT complex, a general chromatin factor that acts to reorganize nucleosomes. The FACT complex is involved in multiple processes that require DNA as a template such as mRNA elongation, DNA replication and DNA repair. During transcription elongation the FACT complex acts as a histone chaperone that both destabilizes and restores nucleosomal structure. It facilitates the passage of RNA polymerase II and transcription by promoting the dissociation of one histone H2A-H2B dimer from the nucleosome, then subsequently promotes the reestablishment of the nucleosome following the passage of RNA polymerase II. In embryos, promotes cell cycle progression and chromosomal segregation. Plays a role in the development of the anterior pharynx during embryonic development. The sequence is that of FACT complex subunit spt-16 from Caenorhabditis elegans.